The primary structure comprises 231 residues: 5'-methylthioadenosine/S-adenosylhomocysteine nucleosidase (231 aa).

Glu13 functions as the Proton acceptor in the catalytic mechanism. Residues Gly79, Met153, and 174–175 each bind substrate; that span reads ME. The active-site Proton donor is the Asp198.

The protein belongs to the PNP/UDP phosphorylase family. MtnN subfamily.

It catalyses the reaction S-adenosyl-L-homocysteine + H2O = S-(5-deoxy-D-ribos-5-yl)-L-homocysteine + adenine. The enzyme catalyses S-methyl-5'-thioadenosine + H2O = 5-(methylsulfanyl)-D-ribose + adenine. It carries out the reaction 5'-deoxyadenosine + H2O = 5-deoxy-D-ribose + adenine. The protein operates within amino-acid biosynthesis; L-methionine biosynthesis via salvage pathway; S-methyl-5-thio-alpha-D-ribose 1-phosphate from S-methyl-5'-thioadenosine (hydrolase route): step 1/2. Its function is as follows. Catalyzes the irreversible cleavage of the glycosidic bond in both 5'-methylthioadenosine (MTA) and S-adenosylhomocysteine (SAH/AdoHcy) to adenine and the corresponding thioribose, 5'-methylthioribose and S-ribosylhomocysteine, respectively. Also cleaves 5'-deoxyadenosine, a toxic by-product of radical S-adenosylmethionine (SAM) enzymes, into 5-deoxyribose and adenine. The sequence is that of 5'-methylthioadenosine/S-adenosylhomocysteine nucleosidase from Halalkalibacterium halodurans (strain ATCC BAA-125 / DSM 18197 / FERM 7344 / JCM 9153 / C-125) (Bacillus halodurans).